The primary structure comprises 155 residues: Ribosome maturation factor RimP (155 aa).

Belongs to the RimP family.

It is found in the cytoplasm. Functionally, required for maturation of 30S ribosomal subunits. This chain is Ribosome maturation factor RimP, found in Synechococcus sp. (strain CC9902).